The sequence spans 219 residues: Putative GEM-like protein 8 (219 aa).

A GRAM domain is found at 96-174 (KIYKRLFKVS…CKINGVNQSQ (79 aa)).

Belongs to the GEM family.

The chain is Putative GEM-like protein 8 from Arabidopsis thaliana (Mouse-ear cress).